The following is a 493-amino-acid chain: 1-aminocyclopropane-1-carboxylate synthase 1 (493 aa).

Lys279 is subject to N6-(pyridoxal phosphate)lysine.

Belongs to the class-I pyridoxal-phosphate-dependent aminotransferase family. In terms of assembly, homodimer. It depends on pyridoxal 5'-phosphate as a cofactor.

The catalysed reaction is S-adenosyl-L-methionine = 1-aminocyclopropane-1-carboxylate + S-methyl-5'-thioadenosine + H(+). Its pathway is alkene biosynthesis; ethylene biosynthesis via S-adenosyl-L-methionine; ethylene from S-adenosyl-L-methionine: step 1/2. Catalyzes the formation of 1-aminocyclopropane-1-carboxylate, a direct precursor of ethylene in higher plants. The protein is 1-aminocyclopropane-1-carboxylate synthase 1 (ACC1A) of Cucurbita pepo (Vegetable marrow).